Here is a 113-residue protein sequence, read N- to C-terminus: Large ribosomal subunit protein uL22 (113 aa).

Belongs to the universal ribosomal protein uL22 family. Part of the 50S ribosomal subunit.

Its function is as follows. This protein binds specifically to 23S rRNA; its binding is stimulated by other ribosomal proteins, e.g. L4, L17, and L20. It is important during the early stages of 50S assembly. It makes multiple contacts with different domains of the 23S rRNA in the assembled 50S subunit and ribosome. In terms of biological role, the globular domain of the protein is located near the polypeptide exit tunnel on the outside of the subunit, while an extended beta-hairpin is found that lines the wall of the exit tunnel in the center of the 70S ribosome. In Bacillus mycoides (strain KBAB4) (Bacillus weihenstephanensis), this protein is Large ribosomal subunit protein uL22.